The sequence spans 219 residues: Transmembrane emp24 domain-containing protein 10 (219 aa).

An N-terminal signal peptide occupies residues 1 to 31 (MSGSSGPLSWPGPRPCALLFLLLLGPSSVLA). The tract at residues 1-142 (MSGSSGPLSW…KNYEEIAKVE (142 aa)) is required for interaction with STX17. Residues 32 to 185 (ISFHLPVNSR…RDTNESTNTR (154 aa)) are Lumenal-facing. The GOLD domain occupies 41-193 (RKCLREEIHK…TRVLYFSIFS (153 aa)). Residues 147–178 (LEVELRRLEDLSESIVNDFAYMKKREEEMRDT) are required for TMED10 and TMED2 cis-Golgi network localization. Dimethylated arginine is present on residues R171 and R176. The N-linked (GlcNAc...) asparagine glycan is linked to N179. The helical transmembrane segment at 186-206 (VLYFSIFSMLCLIGLATWQVF) threads the bilayer. Residues 204-219 (QVFYLRRFFKAKKLIE) form an interaction with COPG1 region. Topologically, residues 207-219 (YLRRFFKAKKLIE) are cytoplasmic. Positions 207–219 (YLRRFFKAKKLIE) are interaction with ARF1 and IL1B. The short motif at 211 to 212 (FF) is the COPII vesicle coat-binding element. The COPI vesicle coat-binding motif lies at 211–219 (FFKAKKLIE).

This sequence belongs to the EMP24/GP25L family. As to quaternary structure, predominantly dimeric and to a lesser extent monomeric in the ER. Monomer and dimer in ERGIC and cis-Golgi network. Forms homooligomer (via GOLD domain); the assembly is promoted by direct binding with leaderless cargos and may form a protein channel that facilitates cargo entry into the ERGIC. Forms heterooligomeric complexes with other members of the p24 family such as TMED2, TMED7 and TMED9. Interacts (via GOLD domain) with TMED2 (via GOLD domain); the complex is required for export of TMED10 from the ER to the cis-Golgi network; the complex is proposed to be involved in cis-Golgi network dynamics and / or biogenesis. Associates with the COPI vesicle coat subunits (coatomer). Tetramerization of the cytoplasmic domain at the Golgi membrane in vitro; the complex is proposed to interact with COPI coatomer and induce budding of the vesicles. Interacts with COPG1; the interaction involves TMED10 homodimer. Interacts with ARF1 (GDP-bound); the interaction probably involves a TMED10 oligomer. Interacts with SEC23A, SEC24B, SEC24C and SEC24D components of the coat protein complex II/COPII, indicative of an association of TMED10 with the COPII vesicle coat. Interacts with CD59. Interacts with MPPE1/PGAP5; the complex might recruit and sort GPI-anchored proteins to the ER-exit site, or the interaction might lead to recycling of PGAP5 between the ER and the Golgi. Interacts with F2LR1/PAR2. Interacts with KDELR2/ERD2; the interaction is disrupted by KDELR2 ligand. Found in a complex composed at least of SURF4, TMED2 and TMED10. Associates with the presenilin-dependent gamma-secretase complex. Interacts with STX17; the interaction is direct. Interacts with IL-1; the interaction is direct. Interacts with RAB21 (active GTP-bound form); the interaction is indirect and regulates TMED10 abundance and localization at the Golgi.

The protein localises to the endoplasmic reticulum membrane. It is found in the endoplasmic reticulum-Golgi intermediate compartment membrane. It localises to the golgi apparatus membrane. The protein resides in the golgi apparatus. Its subcellular location is the cis-Golgi network membrane. The protein localises to the trans-Golgi network membrane. It is found in the cytoplasmic vesicle. It localises to the secretory vesicle membrane. The protein resides in the cell membrane. Its subcellular location is the melanosome. Functionally, cargo receptor involved in protein vesicular trafficking and quality control in the endoplasmic reticulum (ER) and Golgi. The p24 protein family is a group of transmembrane proteins that bind coat protein complex I/COPI and coat protein complex II/COPII involved in vesicular trafficking between the membranes. Acts at the lumenal side for incorporation of secretory cargo molecules into transport vesicles and involved in vesicle coat formation at the cytoplasmic side. Mainly functions in the early secretory pathway and cycles between the ER, ER-Golgi intermediate compartment (ERGIC) and Golgi, mediating cargo transport through COPI and COPII-coated vesicles. In COPII vesicle-mediated anterograde transport, involved in the transport of GPI-anchored proteins by acting together with TMED2 as their cargo receptor; the function specifically implies SEC24C and SEC24D of the COPII vesicle coat and lipid raft-like microdomains of the ER. Recognizes GPI anchors structural remodeled in the ER by the GPI inositol-deacylase/PGAP1 and the metallophosphoesterase MPPE1/PGAP5. In COPI vesicle-mediated retrograde transport, involved in the biogenesis of COPI vesicles and vesicle coat recruitment. Involved in trafficking of amyloid beta A4 protein and soluble APP-beta release (independent from the modulation of gamma-secretase activity). Involved in the KDELR2-mediated retrograde transport of the toxin A subunit (CTX-A-K63)together with COPI and the COOH terminus of KDELR2. On Golgi membranes, acts as a primary receptor for ARF1-GDP, a GTP-binding protein involved in COPI-vesicle formation. Increases coatomer-dependent GTPase-activating activity of ARFGAP2 which mediates the hydrolysis of ARF1-bound GTP and therefore modulates protein trafficking from the Golgi apparatus. Involved in the exocytic trafficking of G protein-coupled receptors F2LR1/PAR2 (trypsin and tryspin-like enzyme receptor), OPRM1 (opioid receptor) and P2RY4 (UTD and UDP receptor) from the Golgi to the plasma membrane, thus contributing to receptor resensitization. In addition to its cargo receptor activity, may also act as a protein channel after oligomerization, facilitating the post-translational entry of leaderless cytoplasmic cargo into the ERGIC. Involved in the translocation into ERGIC, the vesicle entry and the secretion of leaderless cargos (lacking the secretion signal sequence), including the mature form of interleukin 1/IL-1 family members, the alpha-crystallin B chain HSPB5, the carbohydrate-binding proteins galectin-1/LGALS1 and galectin-3/LGALS3, the microtubule-associated protein Tau/MAPT, and the annexin A1/ANXA1; the translocation process is dependent on cargo protein unfolding and enhanced by chaperones HSP90AB1 and HSP90B1/GRP9. Could also associates with the presenilin-dependent gamma-secretase complex in order to regulate gamma-cleavages of the amyloid beta A4 protein to yield amyloid-beta 40/Abeta40. In Mesocricetus auratus (Golden hamster), this protein is Transmembrane emp24 domain-containing protein 10 (TMED10).